The chain runs to 569 residues: Adenine deaminase (569 aa).

This sequence belongs to the metallo-dependent hydrolases superfamily. Adenine deaminase family. Mn(2+) is required as a cofactor.

It catalyses the reaction adenine + H2O + H(+) = hypoxanthine + NH4(+). The chain is Adenine deaminase from Desulfatibacillum aliphaticivorans.